A 508-amino-acid polypeptide reads, in one-letter code: Chromosomal replication initiator protein DnaA (508 aa).

Residues 1–91 (MADDPGSSFT…TDALSRRLGQ (91 aa)) are domain I, interacts with DnaA modulators. Positions 91-167 (QQIQLGVRIA…AIDPAVAAGT (77 aa)) are domain II. The tract at residues 104-152 (DDVEDALIPSAEPFPDTDADLSARRRTDSRASGERGAVTNTQPGWTNYF) is disordered. Positions 124-136 (LSARRRTDSRASG) are enriched in basic and acidic residues. Over residues 141–152 (VTNTQPGWTNYF) the composition is skewed to polar residues. A domain III, AAA+ region region spans residues 168 to 384 (SLNRRYTFDT…GALIRVTAFA (217 aa)). Residues glycine 212, glycine 214, lysine 215, and threonine 216 each coordinate ATP. The segment at 385 to 508 (SLNKTPIDKS…TTRIRQRSKR (124 aa)) is domain IV, binds dsDNA.

Belongs to the DnaA family. In terms of assembly, oligomerizes as a right-handed, spiral filament on DNA at oriC.

The protein resides in the cytoplasm. Its function is as follows. Plays an essential role in the initiation and regulation of chromosomal replication. ATP-DnaA binds to the origin of replication (oriC) to initiate formation of the DNA replication initiation complex once per cell cycle. Binds the DnaA box (a 9 base pair repeat at the origin) and separates the double-stranded (ds)DNA. Forms a right-handed helical filament on oriC DNA; dsDNA binds to the exterior of the filament while single-stranded (ss)DNA is stabiized in the filament's interior. The ATP-DnaA-oriC complex binds and stabilizes one strand of the AT-rich DNA unwinding element (DUE), permitting loading of DNA polymerase. After initiation quickly degrades to an ADP-DnaA complex that is not apt for DNA replication. Binds acidic phospholipids. This chain is Chromosomal replication initiator protein DnaA, found in Mycobacterium avium.